The chain runs to 476 residues: MAGNVQEKQLRWYNIALMSFITVWGFGNVVNNYANQGLVVVFSWVFIFALYFTPYALIVGQLGSTFKDGKGGVSTWIKHTMGPGLAYLAAWTYWVVHIPYLAQKPQAILIALGWAMKGDGSLIKEYSVVALQGLTLVLFIFFMWVASRGMKSLKIVGSVAGIAMFVMSLLYVAMAVTAPAITEVHIATTNITWETFIPHIDFTYITTISMLVFAVGGAEKISPYVNQTRNPGKEFPKGMLCLAVMVAVCAILGSLAMGMMFDSRNIPDDLMTNGQYYAFQKLGEYYNMGNTLMVIYAIANTLGQVAALVFSIDAPLKVLLGDADSKYIPASLCRTNASGTPVNGYFLTLVLVAILIMLPTLGIGDMNNLYKWLLNLNSVVMPLRYLWVFVAFIAVVRLAQKYKPEYVFIRNKPLAMTVGIWCFAFTAFACLTGIFPKMEAFTAEWTFQLALNVATPFVLVGLGLIFPLLARKANSK.

The Cytoplasmic segment spans residues 1 to 9 (MAGNVQEKQ). A helical transmembrane segment spans residues 10–30 (LRWYNIALMSFITVWGFGNVV). Residues 31-38 (NNYANQGL) lie on the Periplasmic side of the membrane. The helical transmembrane segment at 39-59 (VVVFSWVFIFALYFTPYALIV) threads the bilayer. The Cytoplasmic segment spans residues 60–80 (GQLGSTFKDGKGGVSTWIKHT). Residues 81 to 101 (MGPGLAYLAAWTYWVVHIPYL) form a helical membrane-spanning segment. Residues 102 to 125 (AQKPQAILIALGWAMKGDGSLIKE) are Periplasmic-facing. Residues 126-146 (YSVVALQGLTLVLFIFFMWVA) form a helical membrane-spanning segment. The Cytoplasmic portion of the chain corresponds to 147-154 (SRGMKSLK). Residues 155–175 (IVGSVAGIAMFVMSLLYVAMA) traverse the membrane as a helical segment. Over 176-195 (VTAPAITEVHIATTNITWET) the chain is Periplasmic. The helical transmembrane segment at 196 to 216 (FIPHIDFTYITTISMLVFAVG) threads the bilayer. Residues 217–240 (GAEKISPYVNQTRNPGKEFPKGML) lie on the Cytoplasmic side of the membrane. The helical transmembrane segment at 241–261 (CLAVMVAVCAILGSLAMGMMF) threads the bilayer. At 262-291 (DSRNIPDDLMTNGQYYAFQKLGEYYNMGNT) the chain is on the periplasmic side. A helical membrane pass occupies residues 292–312 (LMVIYAIANTLGQVAALVFSI). Residues 313-343 (DAPLKVLLGDADSKYIPASLCRTNASGTPVN) are Cytoplasmic-facing. The chain crosses the membrane as a helical span at residues 344 to 364 (GYFLTLVLVAILIMLPTLGIG). At 365–375 (DMNNLYKWLLN) the chain is on the periplasmic side. A helical membrane pass occupies residues 376 to 396 (LNSVVMPLRYLWVFVAFIAVV). The Cytoplasmic portion of the chain corresponds to 397 to 414 (RLAQKYKPEYVFIRNKPL). A helical transmembrane segment spans residues 415–435 (AMTVGIWCFAFTAFACLTGIF). The Periplasmic portion of the chain corresponds to 436–448 (PKMEAFTAEWTFQ). A helical transmembrane segment spans residues 449–469 (LALNVATPFVLVGLGLIFPLL). The Cytoplasmic segment spans residues 470–476 (ARKANSK).

The protein belongs to the amino acid-polyamine-organocation (APC) superfamily.

It is found in the cell inner membrane. The sequence is that of Inner membrane transporter YcaM (ycaM) from Escherichia coli (strain K12).